A 318-amino-acid chain; its full sequence is Lipoyl synthase (318 aa).

[4Fe-4S] cluster is bound by residues cysteine 64, cysteine 69, cysteine 75, cysteine 90, cysteine 94, cysteine 97, and serine 304. Residues phenylalanine 76–lysine 293 enclose the Radical SAM core domain.

The protein belongs to the radical SAM superfamily. Lipoyl synthase family. [4Fe-4S] cluster serves as cofactor.

It localises to the cytoplasm. The catalysed reaction is [[Fe-S] cluster scaffold protein carrying a second [4Fe-4S](2+) cluster] + N(6)-octanoyl-L-lysyl-[protein] + 2 oxidized [2Fe-2S]-[ferredoxin] + 2 S-adenosyl-L-methionine + 4 H(+) = [[Fe-S] cluster scaffold protein] + N(6)-[(R)-dihydrolipoyl]-L-lysyl-[protein] + 4 Fe(3+) + 2 hydrogen sulfide + 2 5'-deoxyadenosine + 2 L-methionine + 2 reduced [2Fe-2S]-[ferredoxin]. Its pathway is protein modification; protein lipoylation via endogenous pathway; protein N(6)-(lipoyl)lysine from octanoyl-[acyl-carrier-protein]: step 2/2. In terms of biological role, catalyzes the radical-mediated insertion of two sulfur atoms into the C-6 and C-8 positions of the octanoyl moiety bound to the lipoyl domains of lipoate-dependent enzymes, thereby converting the octanoylated domains into lipoylated derivatives. The sequence is that of Lipoyl synthase from Pseudomonas syringae pv. tomato (strain ATCC BAA-871 / DC3000).